The following is a 273-amino-acid chain: Replication factor A protein 2 (273 aa).

Residues 1 to 13 are compositionally biased toward polar residues; sequence MATYQPYNEYSSV. Residues 1 to 38 are disordered; sequence MATYQPYNEYSSVTGGGFENSESRPGSGESETNTRVNT. Phosphoserine is present on S27. A compositionally biased stretch (polar residues) spans 29–38; sequence ESETNTRVNT. Residues 69–157 constitute a DNA-binding region (OB); the sequence is VCFVGVVRNI…NIQYAVIKPI (89 aa). S122 carries the phosphoserine modification.

This sequence belongs to the replication factor A protein 2 family. Heterotrimer of 69, 36, and 13 kDa chains. The DNA-binding activity may reside exclusively on the 69 kDa subunit. Interacts with MCM10. Post-translationally, phosphorylated in a cell cycle-dependent manner with phosphorylation increasing at the entry in S phase and dephosphorylation occurring at mitosis. In terms of processing, the N-terminus is blocked.

The protein localises to the nucleus. Functionally, binds to single-stranded sequences participating in DNA replication in addition to those mediating transcriptional repression (URS1) and activation (CAR1). Stimulates the activity of a cognate strand exchange protein (SEP1). It cooperates with T-AG and DNA topoisomerase I to unwind template DNA containing the simian virus 40 origin of DNA replication. The polypeptide is Replication factor A protein 2 (RFA2) (Saccharomyces cerevisiae (strain ATCC 204508 / S288c) (Baker's yeast)).